Here is a 341-residue protein sequence, read N- to C-terminus: MKALSKLKAEEGIWMTDVPVPELGHNDLLIKIRKTAICGTDVHIYNWDEWSQKTIPVPMVVGHEYVGEVVGIGQEVKGFMIGDRVSGEGHITCGHCRNCRGGRTHLCRNTIGVGVNRPGCFAEYLVIPAFNAFKIPDNISDDLASIFDPFGNAVHTALSFDLVGEDVLVSGAGPIGIMAAAVAKHVGARNVVITDVNEYRLELARKMGITRAVNVAKENLNDVMAELGMTEGFDVGLEMPGAPPAFRTMLDTMNHGGRIAMLGIPPSDMSIDWTKVIFKGLFIKGIYGREMFETWYKMAALIQSGLDLSPIITHRFSIDDFQKGFDAMRSGQSGKVILSWD.

Position 38 (cysteine 38) interacts with Zn(2+). Catalysis depends on charge relay system residues threonine 40 and histidine 43. The Zn(2+) site is built by histidine 63, glutamate 64, cysteine 93, cysteine 96, cysteine 99, and cysteine 107. NAD(+) is bound by residues isoleucine 175, aspartate 195, arginine 200, 262 to 264 (LGI), and 286 to 287 (IY).

The protein belongs to the zinc-containing alcohol dehydrogenase family. Homotetramer. Requires Zn(2+) as cofactor.

The protein localises to the cytoplasm. It carries out the reaction L-threonine + NAD(+) = (2S)-2-amino-3-oxobutanoate + NADH + H(+). It participates in amino-acid degradation; L-threonine degradation via oxydo-reductase pathway; glycine from L-threonine: step 1/2. Its function is as follows. Catalyzes the NAD(+)-dependent oxidation of L-threonine to 2-amino-3-ketobutyrate. This chain is L-threonine 3-dehydrogenase, found in Escherichia coli O139:H28 (strain E24377A / ETEC).